The primary structure comprises 364 residues: UDP-N-acetylglucosamine--N-acetylmuramyl-(pentapeptide) pyrophosphoryl-undecaprenol N-acetylglucosamine transferase (364 aa).

Residues 10 to 12 (TGG), Asn126, Arg167, Ser199, Ile253, and Gln298 each bind UDP-N-acetyl-alpha-D-glucosamine.

It belongs to the glycosyltransferase 28 family. MurG subfamily.

The protein resides in the cell inner membrane. It catalyses the reaction di-trans,octa-cis-undecaprenyl diphospho-N-acetyl-alpha-D-muramoyl-L-alanyl-D-glutamyl-meso-2,6-diaminopimeloyl-D-alanyl-D-alanine + UDP-N-acetyl-alpha-D-glucosamine = di-trans,octa-cis-undecaprenyl diphospho-[N-acetyl-alpha-D-glucosaminyl-(1-&gt;4)]-N-acetyl-alpha-D-muramoyl-L-alanyl-D-glutamyl-meso-2,6-diaminopimeloyl-D-alanyl-D-alanine + UDP + H(+). It functions in the pathway cell wall biogenesis; peptidoglycan biosynthesis. In terms of biological role, cell wall formation. Catalyzes the transfer of a GlcNAc subunit on undecaprenyl-pyrophosphoryl-MurNAc-pentapeptide (lipid intermediate I) to form undecaprenyl-pyrophosphoryl-MurNAc-(pentapeptide)GlcNAc (lipid intermediate II). The polypeptide is UDP-N-acetylglucosamine--N-acetylmuramyl-(pentapeptide) pyrophosphoryl-undecaprenol N-acetylglucosamine transferase (Amoebophilus asiaticus (strain 5a2)).